The following is a 614-amino-acid chain: Putative binding protein BMEII0691 (614 aa).

Positions 1 to 28 are cleaved as a signal peptide; it reads MNRFIAFFRSVFLIGLVATAFGALPARA.

Belongs to the bacterial solute-binding protein 5 family.

The protein resides in the periplasm. In Brucella melitensis biotype 1 (strain ATCC 23456 / CCUG 17765 / NCTC 10094 / 16M), this protein is Putative binding protein BMEII0691.